A 388-amino-acid chain; its full sequence is Na(+)/H(+) antiporter NhaA (388 aa).

11 helical membrane passes run 14-34 (GGII…MGAT), 59-79 (MLLW…GLEV), 95-115 (AFPV…YLAF), 125-145 (GWAI…ALLG), 154-174 (IFLM…IALF), 179-199 (LSIV…LLNL), 219-239 (VLKS…FIPL), 254-274 (VLHP…NAGV), 292-312 (IIAG…WLAL), 328-348 (IMAV…IASL), and 360-380 (WAKL…YSWL).

Belongs to the NhaA Na(+)/H(+) (TC 2.A.33) antiporter family.

It localises to the cell inner membrane. The catalysed reaction is Na(+)(in) + 2 H(+)(out) = Na(+)(out) + 2 H(+)(in). Functionally, na(+)/H(+) antiporter that extrudes sodium in exchange for external protons. The protein is Na(+)/H(+) antiporter NhaA of Salmonella choleraesuis (strain SC-B67).